Consider the following 391-residue polypeptide: Phosphoglycerate kinase (391 aa).

Substrate is bound by residues 21 to 23, R36, 59 to 62, R113, and R146; these read DLN and HLGR. ATP-binding positions include K197, E319, and 345–348; that span reads GGDT.

This sequence belongs to the phosphoglycerate kinase family. As to quaternary structure, monomer.

The protein localises to the cytoplasm. It catalyses the reaction (2R)-3-phosphoglycerate + ATP = (2R)-3-phospho-glyceroyl phosphate + ADP. It participates in carbohydrate degradation; glycolysis; pyruvate from D-glyceraldehyde 3-phosphate: step 2/5. This is Phosphoglycerate kinase from Shewanella sp. (strain MR-4).